A 240-amino-acid chain; its full sequence is 1-(5-phosphoribosyl)-5-[(5-phosphoribosylamino)methylideneamino] imidazole-4-carboxamide isomerase (240 aa).

Residue Asp-8 is the Proton acceptor of the active site. Residue Asp-129 is the Proton donor of the active site.

The protein belongs to the HisA/HisF family.

It is found in the cytoplasm. The enzyme catalyses 1-(5-phospho-beta-D-ribosyl)-5-[(5-phospho-beta-D-ribosylamino)methylideneamino]imidazole-4-carboxamide = 5-[(5-phospho-1-deoxy-D-ribulos-1-ylimino)methylamino]-1-(5-phospho-beta-D-ribosyl)imidazole-4-carboxamide. Its pathway is amino-acid biosynthesis; L-histidine biosynthesis; L-histidine from 5-phospho-alpha-D-ribose 1-diphosphate: step 4/9. In Herpetosiphon aurantiacus (strain ATCC 23779 / DSM 785 / 114-95), this protein is 1-(5-phosphoribosyl)-5-[(5-phosphoribosylamino)methylideneamino] imidazole-4-carboxamide isomerase.